Reading from the N-terminus, the 393-residue chain is Isocitrate dehydrogenase [NAD] subunit gamma 1, mitochondrial (393 aa).

Residues 1-39 (MALKVAIAAGSAAKAIFKPALLCRPWEVLAAHEAPRRSI) constitute a mitochondrion transit peptide. Thr120 provides a ligand contact to citrate. Phosphoserine is present on Ser130. Residue Asn133 participates in citrate binding. Substrate contacts are provided by Arg136 and Arg167. N6-acetyllysine is present on Lys206. Lys226 is subject to N6-succinyllysine. Asp254 is a binding site for substrate. Asp254 is a binding site for Mn(2+). ADP contacts are provided by Asn312, Thr313, and Asn324.

It belongs to the isocitrate and isopropylmalate dehydrogenases family. In terms of assembly, heterooligomer of subunits alpha (IDH3A), beta (IDH3B), and gamma (IDH3G) in the apparent ratio of 2:1:1. The heterodimer containing one IDH3A and one IDH3B subunit and the heterodimer containing one IDH3A and one IDH3G subunit assemble into a heterotetramer (which contains two subunits of IDH3A, one of IDH3B and one of IDH3G) and further into the heterooctamer. The cofactor is Mg(2+). Mn(2+) is required as a cofactor.

It localises to the mitochondrion. The heterotetramer and the heterodimer composed of IDH3A and IDH3G subunits can be allosterically activated by citrate (CIT) or/and ADP, and the two activators can act independently or synergistically. The heterodimer composed of IDH3A and IDH3B subunits cannot be allosterically regulated and the allosteric regulation of the heterotetramer is through the IDH3G subunit and not the IDH3B subunit. The IDH3G subunit contains the allosteric site which consists of a CIT-binding site and an ADP-binding site, and the binding of CIT and ADP causes conformational changes at the allosteric site which are transmitted to the active site in the catalytic subunit (IDH3A) through a cascade of conformational changes at the heterodimer interface, leading to stabilization of the isocitrate-binding at the active site and thus activation of the enzyme. ATP can activate the heterotetramer and the heterodimer composed of IDH3A and IDH3G subunits at low concentrations but inhibits their activities at high concentrations, whereas ATP exhibits only inhibitory effect on the heterodimer composed of IDH3A and IDH3B subunits. In terms of biological role, regulatory subunit which plays a role in the allosteric regulation of the enzyme catalyzing the decarboxylation of isocitrate (ICT) into alpha-ketoglutarate. The heterodimer composed of the alpha (IDH3A) and beta (IDH3B) subunits and the heterodimer composed of the alpha (IDH3A) and gamma (IDH3G) subunits, have considerable basal activity but the full activity of the heterotetramer (containing two subunits of IDH3A, one of IDH3B and one of IDH3G) requires the assembly and cooperative function of both heterodimers. In Rattus norvegicus (Rat), this protein is Isocitrate dehydrogenase [NAD] subunit gamma 1, mitochondrial (Idh3g).